The chain runs to 257 residues: Indole-3-glycerol phosphate synthase (257 aa).

This sequence belongs to the TrpC family.

It catalyses the reaction 1-(2-carboxyphenylamino)-1-deoxy-D-ribulose 5-phosphate + H(+) = (1S,2R)-1-C-(indol-3-yl)glycerol 3-phosphate + CO2 + H2O. It functions in the pathway amino-acid biosynthesis; L-tryptophan biosynthesis; L-tryptophan from chorismate: step 4/5. The protein is Indole-3-glycerol phosphate synthase of Halalkalibacterium halodurans (strain ATCC BAA-125 / DSM 18197 / FERM 7344 / JCM 9153 / C-125) (Bacillus halodurans).